A 132-amino-acid chain; its full sequence is Small ribosomal subunit protein uS11 (132 aa).

This sequence belongs to the universal ribosomal protein uS11 family. In terms of assembly, part of the 30S ribosomal subunit. Interacts with proteins S7 and S18. Binds to IF-3.

Located on the platform of the 30S subunit, it bridges several disparate RNA helices of the 16S rRNA. Forms part of the Shine-Dalgarno cleft in the 70S ribosome. In Clostridium botulinum (strain 657 / Type Ba4), this protein is Small ribosomal subunit protein uS11.